A 706-amino-acid polypeptide reads, in one-letter code: Polyribonucleotide nucleotidyltransferase (706 aa).

The Mg(2+) site is built by D487 and D493. The 60-residue stretch at 553 to 612 (PRLFTMKINQDKIREVIGKGGETIRAITAETGTEINIAEDGTITIAATTQEAGDAAKKRI) folds into the KH domain. Residues 622–692 (GKVYEGTVVK…DRGRVRLSIK (71 aa)) form the S1 motif domain.

The protein belongs to the polyribonucleotide nucleotidyltransferase family. Mg(2+) serves as cofactor.

It localises to the cytoplasm. It catalyses the reaction RNA(n+1) + phosphate = RNA(n) + a ribonucleoside 5'-diphosphate. Functionally, involved in mRNA degradation. Catalyzes the phosphorolysis of single-stranded polyribonucleotides processively in the 3'- to 5'-direction. This chain is Polyribonucleotide nucleotidyltransferase, found in Neisseria meningitidis serogroup A / serotype 4A (strain DSM 15465 / Z2491).